We begin with the raw amino-acid sequence, 30 residues long: Cyclotide mden-G (30 aa).

Residues 1-30 (GIPCAESCVYIPCITAALGCSCKNKVCYRN) constitute a cross-link (cyclopeptide (Gly-Asn)). 3 cysteine pairs are disulfide-bonded: C4–C20, C8–C22, and C13–C27.

This sequence belongs to the cyclotide family. Bracelet subfamily. In terms of processing, this is a cyclic peptide.

Probably participates in a plant defense mechanism. This is Cyclotide mden-G from Melicytus dentatus (Tree violet).